The primary structure comprises 148 residues: UPF0178 protein SUN_1096 (148 aa).

Belongs to the UPF0178 family.

In Sulfurovum sp. (strain NBC37-1), this protein is UPF0178 protein SUN_1096.